Here is a 564-residue protein sequence, read N- to C-terminus: GTYGYPTPAVKKIESYYDVPEGVDIRGRYDAEFAKILTKDALKFVADLQREFRNHIKYALECRREAKKKYNEGALPEFDPATTYIREQEWVCAPVPPAVADRKVEITGPVDRKMVINALNSGAKVFMADFEDALSPGWENLMRGQVNLKDAVAGTISLHDKARNRVYKLNDQTAKLFVRPRGWHLPEAHILIDGEPATGCLVDFGLYFYHSYSAFRRTQGAGFGPFFYLPKMEHSREAKIWNNVFEKAEKVAGIERGSIRATVLIETLPAVFQMNEILYELKDHSVGLNCGRWDYIFSYVKTFQAHPDRLLPDRVLVGMTQHFMKSYSDLLIRTCHRRGVHAMGGMAAQIPIKEDPVANEVALELVRKDKLREVKAGHDGTWAAHPGLIPACMEIFNNNMGNASNQIDTVKREDGANITEQDLLQIPRGARTMEGLRLNTRVGIQYVAAWLTGSGSVPLYNLMEDAATAEISRVQNWQWLKYGVELNGDGLGVKVNKELFGRVVEEEMARIEKEVGTEKFKEGMYKEACKIFTRQCTSPMLDDFLTLDAYNYIVVHHPRETSKL.

The active-site Proton acceptor is the Arg179. The active-site Proton donor is Asp465. The Microbody targeting signal signature appears at 562 to 564; it reads SKL.

This sequence belongs to the malate synthase family.

Its subcellular location is the glyoxysome. The catalysed reaction is glyoxylate + acetyl-CoA + H2O = (S)-malate + CoA + H(+). It participates in carbohydrate metabolism; glyoxylate cycle; (S)-malate from isocitrate: step 2/2. The sequence is that of Malate synthase, glyoxysomal from Glycine max (Soybean).